We begin with the raw amino-acid sequence, 128 residues long: Aspartate 1-decarboxylase (128 aa).

Ser25 functions as the Schiff-base intermediate with substrate; via pyruvic acid in the catalytic mechanism. Pyruvic acid (Ser) is present on Ser25. Thr57 contributes to the substrate binding site. Tyr58 (proton donor) is an active-site residue. 73-75 (GSA) is a substrate binding site.

Belongs to the PanD family. Heterooctamer of four alpha and four beta subunits. Requires pyruvate as cofactor. In terms of processing, is synthesized initially as an inactive proenzyme, which is activated by self-cleavage at a specific serine bond to produce a beta-subunit with a hydroxyl group at its C-terminus and an alpha-subunit with a pyruvoyl group at its N-terminus.

It is found in the cytoplasm. It catalyses the reaction L-aspartate + H(+) = beta-alanine + CO2. The protein operates within cofactor biosynthesis; (R)-pantothenate biosynthesis; beta-alanine from L-aspartate: step 1/1. In terms of biological role, catalyzes the pyruvoyl-dependent decarboxylation of aspartate to produce beta-alanine. This is Aspartate 1-decarboxylase from Paraburkholderia phymatum (strain DSM 17167 / CIP 108236 / LMG 21445 / STM815) (Burkholderia phymatum).